Reading from the N-terminus, the 600-residue chain is NADH-quinone oxidoreductase subunit C/D (600 aa).

An NADH dehydrogenase I subunit C region spans residues Met1–Gln190. The segment at Asp214–Arg600 is NADH dehydrogenase I subunit D.

In the N-terminal section; belongs to the complex I 30 kDa subunit family. It in the C-terminal section; belongs to the complex I 49 kDa subunit family. In terms of assembly, NDH-1 is composed of 13 different subunits. Subunits NuoB, CD, E, F, and G constitute the peripheral sector of the complex.

It localises to the cell inner membrane. It catalyses the reaction a quinone + NADH + 5 H(+)(in) = a quinol + NAD(+) + 4 H(+)(out). In terms of biological role, NDH-1 shuttles electrons from NADH, via FMN and iron-sulfur (Fe-S) centers, to quinones in the respiratory chain. The immediate electron acceptor for the enzyme in this species is believed to be ubiquinone. Couples the redox reaction to proton translocation (for every two electrons transferred, four hydrogen ions are translocated across the cytoplasmic membrane), and thus conserves the redox energy in a proton gradient. This chain is NADH-quinone oxidoreductase subunit C/D, found in Escherichia coli (strain ATCC 8739 / DSM 1576 / NBRC 3972 / NCIMB 8545 / WDCM 00012 / Crooks).